A 619-amino-acid polypeptide reads, in one-letter code: Pentatricopeptide repeat-containing protein At1g68980, mitochondrial (619 aa).

Residues 1–100 (MLRKTLTLIS…RAFVSTTYVI (100 aa)) constitute a mitochondrion transit peptide. PPR repeat units lie at residues 186–221 (DLVA…GVKP), 222–256 (DELS…GFAS), 257–292 (RRIL…GEAS), 295–329 (SEET…ESMS), 366–400 (GIGV…GLQL), 401–435 (DVET…RVAD), 436–466 (LKRC…VMED), 472–506 (KSHD…QYEP), 507–541 (NNQT…KAKL), and 542–576 (EHAL…KIFV).

This sequence belongs to the PPR family. P subfamily.

Its subcellular location is the mitochondrion. The chain is Pentatricopeptide repeat-containing protein At1g68980, mitochondrial from Arabidopsis thaliana (Mouse-ear cress).